The sequence spans 150 residues: Large ribosomal subunit protein uL13 (150 aa).

Residues 129–150 (TEHPHAAQKPQPLQLNPSASAQ) are disordered. Over residues 139 to 150 (QPLQLNPSASAQ) the composition is skewed to polar residues.

It belongs to the universal ribosomal protein uL13 family. In terms of assembly, part of the 50S ribosomal subunit.

Functionally, this protein is one of the early assembly proteins of the 50S ribosomal subunit, although it is not seen to bind rRNA by itself. It is important during the early stages of 50S assembly. This is Large ribosomal subunit protein uL13 from Synechococcus sp. (strain CC9605).